Here is an 83-residue protein sequence, read N- to C-terminus: MYB-like transcription factor ETC1 (83 aa).

Residues 35-72 (AQEEEDLICRMYKLVGERWDLIAGRIPGRTAEEIERFW) enclose the Myb-like domain.

Expressed in developing trichomes and non-root hair cells.

It is found in the nucleus. In terms of biological role, MYB-type transcription factor involved in epidermal cell fate specification. Acts as a negative regulator of trichome development, by mediating lateral inhibition. Promotes the formation of hair developing cells in H position in root epidermis, probably by inhibiting non-hair cell formation. The polypeptide is MYB-like transcription factor ETC1 (ETC1) (Arabidopsis thaliana (Mouse-ear cress)).